We begin with the raw amino-acid sequence, 194 residues long: Glycerol-3-phosphate acyltransferase (194 aa).

Helical transmembrane passes span 7–27 (LLMA…YWVC), 59–79 (LTLF…AMLG), 86–106 (GVTA…HFKG), 116–136 (AGLA…AAVV), and 157–177 (AWRL…FILI).

The protein belongs to the PlsY family. In terms of assembly, probably interacts with PlsX.

It localises to the cell inner membrane. The catalysed reaction is an acyl phosphate + sn-glycerol 3-phosphate = a 1-acyl-sn-glycero-3-phosphate + phosphate. Its pathway is lipid metabolism; phospholipid metabolism. Functionally, catalyzes the transfer of an acyl group from acyl-phosphate (acyl-PO(4)) to glycerol-3-phosphate (G3P) to form lysophosphatidic acid (LPA). This enzyme utilizes acyl-phosphate as fatty acyl donor, but not acyl-CoA or acyl-ACP. This chain is Glycerol-3-phosphate acyltransferase, found in Hahella chejuensis (strain KCTC 2396).